We begin with the raw amino-acid sequence, 654 residues long: MSDVLLKVEDLTRRFVSGDESLTVLNHINLEIKRGEMVAIVGASGSGKSTLMNVLGCLDKPSSGRYFINGQDVSTLESDQLAELRREYFGFIFQRYHLLGDLTAVANVEVPAVYAGVPHRQRTERAQSLLARLGLEDRLTHKPSQLSGGQQQRVSVARALMNGGEVILADEPTGALDSHSGQEMMALLKELHQLGHTIILVTHDMNVANFADRIIEIKDGEIIADTLNAQVVINEQAAKTPSASFHRPAQAVSKWWKWDSFIDALKMALLAMSSHRMRTFLTMLGIIIGIASVVSVVALGNGSQQQILSNISSMGTNTIDVRPGKGFGDRRSGRVKTLTADDAKSLESLPFVDSVTPSLSNSLTVRYANQDATASVEGVGEDYFRVRGYEIAKGQFWDEESVNSLAQEAVIDDNTRKEMFADRNPIGEVIFLGSLPVRIVGVTQKKEDAFGNSDALKIWVPYTTMSGRMMGQRYLNGITVRIDENAPSAAVEQSIINLLKMRHGTEDFFTINTDTIRQSIEKTTATMTLLISAIAVISLIVGGIGVMNIMLVSVTERTKEIGVRMAVGARQADILRQFLIEAVLVCLCGGIAGIGLAFLIGFAFSTSGSSFQMIYSMNSIIWAFICSTLIGIAFGFLPARNAAKLDPIEALARD.

The region spanning 6-244 (LKVEDLTRRF…EQAAKTPSAS (239 aa)) is the ABC transporter domain. 42-49 (GASGSGKS) provides a ligand contact to ATP. Transmembrane regions (helical) follow at residues 280 to 300 (FLTM…VALG), 529 to 549 (LLIS…VMNI), 584 to 604 (LVCL…GFAF), and 619 to 639 (SIIW…FLPA).

This sequence belongs to the ABC transporter superfamily. Macrolide exporter (TC 3.A.1.122) family. As to quaternary structure, homodimer. Part of the tripartite efflux system MacAB-TolC, which is composed of an inner membrane transporter, MacB, a periplasmic membrane fusion protein, MacA, and an outer membrane component, TolC. The complex forms a large protein conduit and can translocate molecules across both the inner and outer membranes. Interacts with MacA.

Its subcellular location is the cell inner membrane. Its function is as follows. Part of the tripartite efflux system MacAB-TolC. MacB is a non-canonical ABC transporter that contains transmembrane domains (TMD), which form a pore in the inner membrane, and an ATP-binding domain (NBD), which is responsible for energy generation. Confers resistance against macrolides. This Vibrio parahaemolyticus serotype O3:K6 (strain RIMD 2210633) protein is Macrolide export ATP-binding/permease protein MacB.